Consider the following 218-residue polypeptide: 7-cyano-7-deazaguanine synthase (218 aa).

9-19 is a binding site for ATP; it reads FSGGMDSFTVL. Residues cysteine 185, cysteine 193, cysteine 196, and cysteine 199 each coordinate Zn(2+).

The protein belongs to the QueC family. Requires Zn(2+) as cofactor.

It catalyses the reaction 7-carboxy-7-deazaguanine + NH4(+) + ATP = 7-cyano-7-deazaguanine + ADP + phosphate + H2O + H(+). It functions in the pathway purine metabolism; 7-cyano-7-deazaguanine biosynthesis. Functionally, catalyzes the ATP-dependent conversion of 7-carboxy-7-deazaguanine (CDG) to 7-cyano-7-deazaguanine (preQ(0)). This chain is 7-cyano-7-deazaguanine synthase, found in Pseudoalteromonas atlantica (strain T6c / ATCC BAA-1087).